Here is a 360-residue protein sequence, read N- to C-terminus: Peptide chain release factor 1 (360 aa).

Gln234 carries the post-translational modification N5-methylglutamine.

Belongs to the prokaryotic/mitochondrial release factor family. Post-translationally, methylated by PrmC. Methylation increases the termination efficiency of RF1.

It is found in the cytoplasm. In terms of biological role, peptide chain release factor 1 directs the termination of translation in response to the peptide chain termination codons UAG and UAA. The sequence is that of Peptide chain release factor 1 from Clostridium botulinum (strain Alaska E43 / Type E3).